Reading from the N-terminus, the 288-residue chain is MKQYLDLARHIMENGTLKSDRTGTGTKSIFGYQMFFDLKDGFPLLTTKKTFLKGIIHELLWFIKGDTNIKYLVDNNVGIWTDWPYKNYMNSSEYQGESIKEFSDKIRQSDEFAKKWGDLGPVYGSQWRNFNGVDQIEYIINTLKTNPDSRRMVLSAWNPAEIGQMMLPPCHTLIQFYVVDNKLSLQLYQRSGDVFLGIPFNIASYAVFLMMVAQVTGFELGSFVHTIGDAHIYTNHFDQINLQLTRTPRRLPILKINKSITRLEDFKYEDFELVGYDPYPPIKGVVAV.

DUMP contacts are provided by residues arginine 21 and 150–151 (RR). The active-site Nucleophile is the cysteine 170. DUMP-binding positions include 190 to 193 (RSGD), asparagine 201, and 231 to 233 (HIY). Aspartate 193 provides a ligand contact to (6R)-5,10-methylene-5,6,7,8-tetrahydrofolate. Alanine 287 contributes to the (6R)-5,10-methylene-5,6,7,8-tetrahydrofolate binding site.

It belongs to the thymidylate synthase family. Bacterial-type ThyA subfamily. Homodimer.

It localises to the cytoplasm. It catalyses the reaction dUMP + (6R)-5,10-methylene-5,6,7,8-tetrahydrofolate = 7,8-dihydrofolate + dTMP. It functions in the pathway pyrimidine metabolism; dTTP biosynthesis. Catalyzes the reductive methylation of 2'-deoxyuridine-5'-monophosphate (dUMP) to 2'-deoxythymidine-5'-monophosphate (dTMP) while utilizing 5,10-methylenetetrahydrofolate (mTHF) as the methyl donor and reductant in the reaction, yielding dihydrofolate (DHF) as a by-product. This enzymatic reaction provides an intracellular de novo source of dTMP, an essential precursor for DNA biosynthesis. This chain is Thymidylate synthase, found in Acholeplasma laidlawii (strain PG-8A).